A 180-amino-acid polypeptide reads, in one-letter code: Ribulose bisphosphate carboxylase small subunit, chloroplastic 2 (180 aa).

The transit peptide at 1–56 (MASSVISSAAVATRSNVTQASMVAPFTGLKSSATFPVTKKQNLDITSIASNGGRVS) directs the protein to the chloroplast.

It belongs to the RuBisCO small chain family. In terms of assembly, heterohexadecamer of 8 large and 8 small subunits. (Microbial infection) Binds to tobamovirus movement protein; this interaction seems required for viral systemic movement.

Its subcellular location is the plastid. It localises to the chloroplast. The protein resides in the cell junction. It is found in the plasmodesma. Its function is as follows. RuBisCO catalyzes two reactions: the carboxylation of D-ribulose 1,5-bisphosphate, the primary event in carbon dioxide fixation, as well as the oxidative fragmentation of the pentose substrate. Both reactions occur simultaneously and in competition at the same active site. Although the small subunit is not catalytic it is essential for maximal activity. Involved in antiviral defenses. This is Ribulose bisphosphate carboxylase small subunit, chloroplastic 2 from Solanum lycopersicum (Tomato).